Reading from the N-terminus, the 266-residue chain is Cytochrome c oxidase assembly factor 7 homolog (266 aa).

2 Sel1-like repeats span residues 32–64 and 66–104; these read PEACHLLGDYLEGIKKDFEKASKVYKSTCDDYG and AKSCYKYGNYSFLGKGKSGSKGNPQVAYEYYEKGCNLND. Over residues 166–179 the composition is skewed to low complexity; that stretch reads AVTASSGSGTSSPP. The tract at residues 166–187 is disordered; it reads AVTASSGSGTSSPPAGQPPLKD. The stretch at 212 to 247 is one Sel1-like 3 repeat; it reads MYACANLSQMYARGDGIEKNEKEAEKYKKLALEMQD.

The protein belongs to the hcp beta-lactamase family.

In terms of biological role, required for locomotion. Probably involved in the regulation of formation/maintenance of motor neurons at presynaptic terminals at the neuromuscular junction. The protein is Cytochrome c oxidase assembly factor 7 homolog of Drosophila melanogaster (Fruit fly).